Here is a 66-residue protein sequence, read N- to C-terminus: Large ribosomal subunit protein bL35 (66 aa).

A disordered region spans residues 1-42 (MPKQKTHRASAKRFKRTANGGLKRHHAYTGHRFHGKTKKQRR).

Belongs to the bacterial ribosomal protein bL35 family.

The chain is Large ribosomal subunit protein bL35 from Lactobacillus gasseri (strain ATCC 33323 / DSM 20243 / BCRC 14619 / CIP 102991 / JCM 1131 / KCTC 3163 / NCIMB 11718 / NCTC 13722 / AM63).